Here is a 411-residue protein sequence, read N- to C-terminus: Probable UDP-arabinose 4-epimerase 3 (411 aa).

Residues M1–N13 show a composition bias toward polar residues. Residues M1–E22 form a disordered region. The Cytoplasmic portion of the chain corresponds to M1 to N31. A helical; Signal-anchor for type II membrane protein transmembrane segment spans residues V32–L50. The Lumenal portion of the chain corresponds to K51–S411. H71 to L102 lines the NAD(+) pocket. The Proton acceptor role is filled by Y219.

This sequence belongs to the NAD(P)-dependent epimerase/dehydratase family. NAD(+) is required as a cofactor.

Its subcellular location is the golgi apparatus. The protein resides in the golgi stack membrane. It carries out the reaction UDP-beta-L-arabinopyranose = UDP-alpha-D-xylose. It participates in nucleotide-sugar biosynthesis; UDP-L-arabinose biosynthesis; UDP-L-arabinose from UDP-alpha-D-xylose: step 1/1. It functions in the pathway cell wall biogenesis; cell wall polysaccharide biosynthesis. The sequence is that of Probable UDP-arabinose 4-epimerase 3 from Arabidopsis thaliana (Mouse-ear cress).